An 836-amino-acid polypeptide reads, in one-letter code: Conserved oligomeric Golgi complex subunit 7 (836 aa).

Coiled-coil stretches lie at residues 29–49 and 107–127; these read QDSL…ASEE and LARV…LQDA. The interval 246–265 is disordered; it reads KLANERSESQRLSSGDEFQS.

It belongs to the COG7 family. Component of the conserved oligomeric Golgi complex which is composed of eight different subunits and is required for normal Golgi morphology and localization. Interacts with COG5 and COG6.

The protein resides in the golgi apparatus membrane. Functionally, required for normal Golgi function. Necessary for embryo development and pigmentation, especially for the expansion of cells and organs, and for the formation of the organized shoot apical meristem (SAM). Probably involved in the generation of the extra-cellular matrix. In Arabidopsis thaliana (Mouse-ear cress), this protein is Conserved oligomeric Golgi complex subunit 7.